Consider the following 68-residue polypeptide: Large ribosomal subunit protein bL32 (68 aa).

Belongs to the bacterial ribosomal protein bL32 family.

The sequence is that of Large ribosomal subunit protein bL32 from Cereibacter sphaeroides (strain ATCC 17025 / ATH 2.4.3) (Rhodobacter sphaeroides).